Reading from the N-terminus, the 256-residue chain is Floral homeotic protein APETALA 1 (256 aa).

Residues 1–61 (MGRGRVQLKR…GKLFEYSTDP (61 aa)) form the MADS-box domain. A K-box domain is found at 88–178 (NTNWSMEYNR…SKQIKERENV (91 aa)). A disordered region spans residues 187 to 206 (DEQNHGHNMPPPPPPQQHQI).

In terms of assembly, homodimer capable of binding to CArG-box sequences.

The protein localises to the nucleus. Transcription factor that promotes early floral meristem identity in synergy with LEAFY. Displays a redundant function with CAULIFLOWER in the up-regulation of LEAFY. Required subsequently for the transition of an inflorescence meristem into a floral meristem, and for the normal development of sepals and petals in flowers. Regulates positively B class homeotic proteins. The polypeptide is Floral homeotic protein APETALA 1 (AP1) (Brassica oleracea (Wild cabbage)).